The chain runs to 311 residues: MEFIAQFLEMLLAERALSKNSILSYKRDLLDFQHYLAAQKISELNITTGNIRKWIEYLASNNLHARSINRKISTIKSYYAFLISENHTKFNPVLNIDLPKYQNKLPIILSIDQIKLILEYCSKDNTPEGIRLNAMINLLYASGLRVSELVSLKLADILTNNTSKGTVRKIFSVLGKGNKERVIVINDQAVLSIIKYLEIRDFFINKAKSKNLIYLFPSSAVAGYMTRQNFAILLKSVALYTGLNPEHVSPHILRHSFASHLLEGGADLRVIQELLGHADISTTQIYTHLHTNHLKKALLHHPLNKNSFILS.

A Core-binding (CB) domain is found at Met1–Ile83. One can recognise a Tyr recombinase domain in the interval Lys104–Leu299. Residues Arg145, Lys176, His251, Arg254, and His277 contribute to the active site. Tyr286 acts as the O-(3'-phospho-DNA)-tyrosine intermediate in catalysis.

It belongs to the 'phage' integrase family. XerD subfamily. Forms a cyclic heterotetrameric complex composed of two molecules of XerC and two molecules of XerD.

Its subcellular location is the cytoplasm. In terms of biological role, site-specific tyrosine recombinase, which acts by catalyzing the cutting and rejoining of the recombining DNA molecules. The XerC-XerD complex is essential to convert dimers of the bacterial chromosome into monomers to permit their segregation at cell division. It also contributes to the segregational stability of plasmids. The chain is Tyrosine recombinase XerD from Rickettsia prowazekii (strain Madrid E).